A 427-amino-acid chain; its full sequence is Methylenetetrahydrofolate--tRNA-(uracil-5-)-methyltransferase TrmFO (427 aa).

Residue 6–11 (GAGLAG) coordinates FAD.

It belongs to the MnmG family. TrmFO subfamily. FAD is required as a cofactor.

The protein localises to the cytoplasm. The catalysed reaction is uridine(54) in tRNA + (6R)-5,10-methylene-5,6,7,8-tetrahydrofolate + NADH + H(+) = 5-methyluridine(54) in tRNA + (6S)-5,6,7,8-tetrahydrofolate + NAD(+). It carries out the reaction uridine(54) in tRNA + (6R)-5,10-methylene-5,6,7,8-tetrahydrofolate + NADPH + H(+) = 5-methyluridine(54) in tRNA + (6S)-5,6,7,8-tetrahydrofolate + NADP(+). Functionally, catalyzes the folate-dependent formation of 5-methyl-uridine at position 54 (M-5-U54) in all tRNAs. The protein is Methylenetetrahydrofolate--tRNA-(uracil-5-)-methyltransferase TrmFO of Acholeplasma laidlawii (strain PG-8A).